We begin with the raw amino-acid sequence, 211 residues long: Ribosomal RNA large subunit methyltransferase E (211 aa).

5 residues coordinate S-adenosyl-L-methionine: Gly-60, Trp-62, Asp-85, Asp-101, and Asp-126. Lys-166 acts as the Proton acceptor in catalysis.

Belongs to the class I-like SAM-binding methyltransferase superfamily. RNA methyltransferase RlmE family.

The protein localises to the cytoplasm. It catalyses the reaction uridine(2552) in 23S rRNA + S-adenosyl-L-methionine = 2'-O-methyluridine(2552) in 23S rRNA + S-adenosyl-L-homocysteine + H(+). Specifically methylates the uridine in position 2552 of 23S rRNA at the 2'-O position of the ribose in the fully assembled 50S ribosomal subunit. This chain is Ribosomal RNA large subunit methyltransferase E, found in Bordetella petrii (strain ATCC BAA-461 / DSM 12804 / CCUG 43448).